The primary structure comprises 430 residues: Bystin (430 aa).

2 stretches are compositionally biased toward basic residues: residues 1–12 and 26–35; these read MGKDKKDRKHKG and PSKRVKHRRE. Disordered stretches follow at residues 1–45 and 65–113; these read MGKD…ESFV and MEEY…SETY. Basic and acidic residues predominate over residues 68–78; that stretch reads YGFRKTGDRKT. The span at 93–104 shows a compositional bias: acidic residues; sequence RIDDDDEDDSDD.

It belongs to the bystin family.

The protein localises to the nucleus. Its subcellular location is the nucleolus. Its function is as follows. Required for processing of 20S pre-rRNA precursor and biogenesis of 40S ribosomal subunits. The protein is Bystin (bysl) of Nematostella vectensis (Starlet sea anemone).